The primary structure comprises 297 residues: Phosphatidylglycerol--prolipoprotein diacylglyceryl transferase (297 aa).

The next 4 helical transmembrane spans lie at Phe20 to Ile40, Glu57 to Phe77, Trp107 to Phe127, and Ile133 to Gly153. Residue Arg154 coordinates a 1,2-diacyl-sn-glycero-3-phospho-(1'-sn-glycerol). 3 helical membrane passes run Pro193–Phe213, Gly225–Leu245, and Ala266–Leu286.

Belongs to the Lgt family.

It is found in the cell inner membrane. The enzyme catalyses L-cysteinyl-[prolipoprotein] + a 1,2-diacyl-sn-glycero-3-phospho-(1'-sn-glycerol) = an S-1,2-diacyl-sn-glyceryl-L-cysteinyl-[prolipoprotein] + sn-glycerol 1-phosphate + H(+). It functions in the pathway protein modification; lipoprotein biosynthesis (diacylglyceryl transfer). Its function is as follows. Catalyzes the transfer of the diacylglyceryl group from phosphatidylglycerol to the sulfhydryl group of the N-terminal cysteine of a prolipoprotein, the first step in the formation of mature lipoproteins. The protein is Phosphatidylglycerol--prolipoprotein diacylglyceryl transferase of Prochlorococcus marinus (strain MIT 9301).